The primary structure comprises 858 residues: DNA mismatch repair protein MutS (858 aa).

600–607 (GPNMSGKS) provides a ligand contact to ATP. Residues 803–823 (EAASDEVDDNNSENSPMTDAE) form a disordered region.

It belongs to the DNA mismatch repair MutS family.

Functionally, this protein is involved in the repair of mismatches in DNA. It is possible that it carries out the mismatch recognition step. This protein has a weak ATPase activity. This is DNA mismatch repair protein MutS from Lactobacillus helveticus (strain DPC 4571).